A 110-amino-acid chain; its full sequence is Integration host factor subunit alpha (110 aa).

Belongs to the bacterial histone-like protein family. Heterodimer of an alpha and a beta chain.

This protein is one of the two subunits of integration host factor, a specific DNA-binding protein that functions in genetic recombination as well as in transcriptional and translational control. In Delftia acidovorans (strain DSM 14801 / SPH-1), this protein is Integration host factor subunit alpha.